The chain runs to 265 residues: Hydroxyethylthiazole kinase (265 aa).

M55 is a binding site for substrate. ATP-binding residues include R130 and S176. Residue G203 participates in substrate binding.

The protein belongs to the Thz kinase family. Mg(2+) is required as a cofactor.

The catalysed reaction is 5-(2-hydroxyethyl)-4-methylthiazole + ATP = 4-methyl-5-(2-phosphooxyethyl)-thiazole + ADP + H(+). The protein operates within cofactor biosynthesis; thiamine diphosphate biosynthesis; 4-methyl-5-(2-phosphoethyl)-thiazole from 5-(2-hydroxyethyl)-4-methylthiazole: step 1/1. Its function is as follows. Catalyzes the phosphorylation of the hydroxyl group of 4-methyl-5-beta-hydroxyethylthiazole (THZ). This chain is Hydroxyethylthiazole kinase, found in Leptospira interrogans serogroup Icterohaemorrhagiae serovar Lai (strain 56601).